Reading from the N-terminus, the 226-residue chain is Cytidylate kinase (226 aa).

10 to 18 contributes to the ATP binding site; that stretch reads GPASSGKST.

It belongs to the cytidylate kinase family. Type 1 subfamily.

It is found in the cytoplasm. The enzyme catalyses CMP + ATP = CDP + ADP. The catalysed reaction is dCMP + ATP = dCDP + ADP. This Streptococcus pyogenes serotype M4 (strain MGAS10750) protein is Cytidylate kinase.